The primary structure comprises 269 residues: Flagellar hook-basal body complex protein FlhP (269 aa).

Positions 7–65 form a coiled coil; it reads TASTTLNQLQQQIDTISSNLSNSNTTGYKAKDTNFSELVRQQFDQVDEKNEEVAKARKT.

This sequence belongs to the flagella basal body rod proteins family.

The sequence is that of Flagellar hook-basal body complex protein FlhP (flhP) from Bacillus subtilis (strain 168).